The chain runs to 505 residues: 6-phosphofructo-2-kinase/fructose-2,6-bisphosphatase 2 (505 aa).

Residues 1–20 form a disordered region; it reads MSGASSSEQNNNSYETKTPN. Ser-2 carries the post-translational modification N-acetylserine. The tract at residues 2–248 is 6-phosphofructo-2-kinase; sequence SGASSSEQNN…VYYLMNIHVQ (247 aa). The residue at position 29 (Ser-29) is a Phosphoserine; by PKA. Residue 45 to 53 participates in ATP binding; sequence GLPARGKTY. Beta-D-fructose 6-phosphate-binding residues include Arg-78 and Arg-102. Asp-128 is a catalytic residue. Positions 130 and 136 each coordinate beta-D-fructose 6-phosphate. Cys-158 is a catalytic residue. 167 to 172 serves as a coordination point for ATP; it reads NILEVK. Residues Lys-172, Arg-193, and Tyr-197 each contribute to the beta-D-fructose 6-phosphate site. The segment at 249 to 505 is fructose-2,6-bisphosphatase; that stretch reads PRTIYLCRHG…RAQDMQEGAD (257 aa). Residue Arg-256 participates in beta-D-fructose 2,6-bisphosphate binding. Catalysis depends on His-257, which acts as the Tele-phosphohistidine intermediate. Asn-263 and Gly-269 together coordinate beta-D-fructose 2,6-bisphosphate. Catalysis depends on Glu-326, which acts as the Proton donor/acceptor. Tyr-337, Arg-351, Lys-355, Tyr-366, Gln-392, and Arg-396 together coordinate beta-D-fructose 2,6-bisphosphate. 348 to 351 contributes to the ATP binding site; the sequence is FALR. Residues 392-396 and Tyr-428 contribute to the ATP site; that span reads QAVMR. Residues 445 to 505 are disordered; sequence HRDKPTNNFP…RAQDMQEGAD (61 aa). The segment covering 450–476 has biased composition (polar residues); that stretch reads TNNFPKNQTPVRMRRNSFTPLSSSNTI. Ser-466 is subject to Phosphoserine; by AMPK. Phosphothreonine occurs at positions 468 and 475. At Ser-483 the chain carries Phosphoserine; by BRAF. Residues Ser-486 and Ser-493 each carry the phosphoserine modification.

In the C-terminal section; belongs to the phosphoglycerate mutase family. As to quaternary structure, homodimer. Forms a heterodimer with PFKFB3. Phosphorylation by AMPK stimulates activity. In terms of tissue distribution, heart.

It carries out the reaction beta-D-fructose 2,6-bisphosphate + H2O = beta-D-fructose 6-phosphate + phosphate. The catalysed reaction is beta-D-fructose 6-phosphate + ATP = beta-D-fructose 2,6-bisphosphate + ADP + H(+). Phosphorylation results in the activation of the kinase activity. Functionally, synthesis and degradation of fructose 2,6-bisphosphate. The polypeptide is 6-phosphofructo-2-kinase/fructose-2,6-bisphosphatase 2 (Homo sapiens (Human)).